A 234-amino-acid polypeptide reads, in one-letter code: Sugar fermentation stimulation protein homolog (234 aa).

This sequence belongs to the SfsA family.

This Idiomarina loihiensis (strain ATCC BAA-735 / DSM 15497 / L2-TR) protein is Sugar fermentation stimulation protein homolog.